A 516-amino-acid chain; its full sequence is Glycerol-3-phosphate dehydrogenase 1 (516 aa).

28–56 (DVIVIGGGITGVGIALDAATRGLTVALVE) contacts FAD.

This sequence belongs to the FAD-dependent glycerol-3-phosphate dehydrogenase family. The cofactor is FAD.

It is found in the cytoplasm. The catalysed reaction is a quinone + sn-glycerol 3-phosphate = dihydroxyacetone phosphate + a quinol. This is Glycerol-3-phosphate dehydrogenase 1 (glpD1) from Mycobacterium bovis (strain ATCC BAA-935 / AF2122/97).